A 298-amino-acid polypeptide reads, in one-letter code: MSETSPHRSGSVAVIGRPNVGKSTLTNALVGAKVSIVSNRPQTTRHRLLGIATFPEGQLMLVDTPGLHREQKRAMNRVMNRAARGSLEGVDAAVLVIEAGRWDEEDTLAFRVLSDADVPVVLVVNKVDRLKDKTALFPFLAQVSEGRTFAAVHPVSALKRKGLEALVSDLLKLVPEAEAMYGEDEITDRSQRFLAGELVREQLMRQLGEELPYATTVEIERFAEDGALLRIGAVIWVEREGQKAIVIGKGGTRLKDIGGKARLQMERLFGAKVFLETWVRVREGWSDDEAALKAFGYD.

The Era-type G domain maps to 8–176 (RSGSVAVIGR…VSDLLKLVPE (169 aa)). Residues 16–23 (GRPNVGKS) are G1. GTP is bound at residue 16-23 (GRPNVGKS). The segment at 42–46 (QTTRH) is G2. Positions 63–66 (DTPG) are G3. Residues 63 to 67 (DTPGL) and 125 to 128 (NKVD) each bind GTP. The segment at 125–128 (NKVD) is G4. The segment at 155 to 157 (VSA) is G5. The region spanning 199–283 (VREQLMRQLG…FLETWVRVRE (85 aa)) is the KH type-2 domain.

The protein belongs to the TRAFAC class TrmE-Era-EngA-EngB-Septin-like GTPase superfamily. Era GTPase family. In terms of assembly, monomer.

The protein resides in the cytoplasm. It localises to the cell inner membrane. Functionally, an essential GTPase that binds both GDP and GTP, with rapid nucleotide exchange. Plays a role in 16S rRNA processing and 30S ribosomal subunit biogenesis and possibly also in cell cycle regulation and energy metabolism. The protein is GTPase Era of Xanthomonas campestris pv. campestris (strain 8004).